The sequence spans 183 residues: Regulatory protein RecX (183 aa).

Positions 1–12 are enriched in polar residues; sequence MTSFPHPSTSES. A disordered region spans residues 1-26; the sequence is MTSFPHPSTSESGPDPDSEPNREEQA.

Belongs to the RecX family.

The protein localises to the cytoplasm. Functionally, modulates RecA activity. This chain is Regulatory protein RecX, found in Mycobacterium sp. (strain JLS).